A 559-amino-acid chain; its full sequence is MVSLLSCGTSASSHIVKKALTRLSLAMAAGLCFNLAAQEPTPPIITPTSPSVTIPLQTYADEQAIVKSANNLNTETKVRFAKTANFDSDTVVKIARKLAQKPYVELKDPLPPGLAKISYDEYRDIRFKPEASIWKAEGLPYQMQLFHRGFYFQDLIEIALVEGKQASHLAYNSEFFTAGDVLSQRLPTQDIGYSGLRIHYPLNNPAYFDELMVFQGASYFRALGKGSDYGLSSRGLALNTAEPEGEEFPIFRAFWVERPNTDSNLIVVHALLDSPSVAGAYRFSVRPGENTHIDVEATLFPRVDLVKVGLAPSTSMFLHSMNGRQNTDDFRPEVHDSDALLILNGRGERLWRPLANPKQLQVSAFMDNSPQGFGLIQRERSFDAYQDLEAHYERRPSLWVEPVGNWGAGEVVLTEIPTDSEIHDNIVSYWKPKQPIAAGSEFHFTYRLIWGSEPEVDDGTVIVARTASGRAEIAKATPRRLFVIDYQVKEGNNDEIPVAKVQSSAGVVTNVVVSRQPKTNGYRLAFEMDPQDAELIELRAELKFTGPRDVETWLYRWTL.

An N-terminal signal peptide occupies residues 1–37 (MVSLLSCGTSASSHIVKKALTRLSLAMAAGLCFNLAA).

This sequence belongs to the OpgD/OpgG family.

The protein localises to the periplasm. It participates in glycan metabolism; osmoregulated periplasmic glucan (OPG) biosynthesis. Functionally, involved in the biosynthesis of osmoregulated periplasmic glucans (OPGs). This Shewanella frigidimarina (strain NCIMB 400) protein is Glucans biosynthesis protein G.